The sequence spans 454 residues: Chromosomal replication initiator protein DnaA (454 aa).

Residues 1–74 (MFDLEKFWDS…IQSAYAYAGI (74 aa)) are domain I, interacts with DnaA modulators. The tract at residues 74 to 116 (IDIYPVFVVKNGPTPSSERMLEPQPQAKPEKARPQGREFTKDL) is domain II. Positions 88–112 (PSSERMLEPQPQAKPEKARPQGREF) are disordered. A compositionally biased stretch (basic and acidic residues) spans 101–112 (KPEKARPQGREF). The segment at 117–333 (RLNEKYTFEN…GALVKVQAQA (217 aa)) is domain III, AAA+ region. ATP is bound by residues Gly-161, Gly-163, Lys-164, and Thr-165. The interval 334–454 (TIQKQDINIG…VSDLRQMLER (121 aa)) is domain IV, binds dsDNA.

This sequence belongs to the DnaA family. As to quaternary structure, oligomerizes as a right-handed, spiral filament on DNA at oriC.

The protein localises to the cytoplasm. In terms of biological role, plays an essential role in the initiation and regulation of chromosomal replication. ATP-DnaA binds to the origin of replication (oriC) to initiate formation of the DNA replication initiation complex once per cell cycle. Binds the DnaA box (a 9 base pair repeat at the origin) and separates the double-stranded (ds)DNA. Forms a right-handed helical filament on oriC DNA; dsDNA binds to the exterior of the filament while single-stranded (ss)DNA is stabiized in the filament's interior. The ATP-DnaA-oriC complex binds and stabilizes one strand of the AT-rich DNA unwinding element (DUE), permitting loading of DNA polymerase. After initiation quickly degrades to an ADP-DnaA complex that is not apt for DNA replication. Binds acidic phospholipids. This Lactobacillus delbrueckii subsp. bulgaricus (strain ATCC 11842 / DSM 20081 / BCRC 10696 / JCM 1002 / NBRC 13953 / NCIMB 11778 / NCTC 12712 / WDCM 00102 / Lb 14) protein is Chromosomal replication initiator protein DnaA.